Consider the following 321-residue polypeptide: Lipoyl synthase (321 aa).

The [4Fe-4S] cluster site is built by Cys-68, Cys-73, Cys-79, Cys-94, Cys-98, Cys-101, and Ser-308. A Radical SAM core domain is found at 80–297 (FNHGTATFMI…KEQALAMGFT (218 aa)).

It belongs to the radical SAM superfamily. Lipoyl synthase family. The cofactor is [4Fe-4S] cluster.

It localises to the cytoplasm. It catalyses the reaction [[Fe-S] cluster scaffold protein carrying a second [4Fe-4S](2+) cluster] + N(6)-octanoyl-L-lysyl-[protein] + 2 oxidized [2Fe-2S]-[ferredoxin] + 2 S-adenosyl-L-methionine + 4 H(+) = [[Fe-S] cluster scaffold protein] + N(6)-[(R)-dihydrolipoyl]-L-lysyl-[protein] + 4 Fe(3+) + 2 hydrogen sulfide + 2 5'-deoxyadenosine + 2 L-methionine + 2 reduced [2Fe-2S]-[ferredoxin]. It functions in the pathway protein modification; protein lipoylation via endogenous pathway; protein N(6)-(lipoyl)lysine from octanoyl-[acyl-carrier-protein]: step 2/2. Its function is as follows. Catalyzes the radical-mediated insertion of two sulfur atoms into the C-6 and C-8 positions of the octanoyl moiety bound to the lipoyl domains of lipoate-dependent enzymes, thereby converting the octanoylated domains into lipoylated derivatives. This is Lipoyl synthase from Proteus mirabilis (strain HI4320).